We begin with the raw amino-acid sequence, 34 residues long: DDIT3 upstream open reading frame protein (34 aa).

Interacts with DDIT3 (isoform 1).

It localises to the nucleus. The protein localises to the cytoplasm. Functionally, product of the upstream open reading frame (uORF) of DDIT3/CHOP that is specifically produced in absence of stress, thereby preventing translation of downstream stress effector DDIT3/CHOP. This Homo sapiens (Human) protein is DDIT3 upstream open reading frame protein.